Here is a 263-residue protein sequence, read N- to C-terminus: MRRISLTSSPVRLLLFLLLLLIALEIMVGGHSLCFNFTIKSLSRPGQPWCEAQVFLNKNLFLQYNSDNNMVKPLGLLGKKVYATSTWGELTQTLGEVGRDLRMLLCDIKPQIKTSDPSTLQVEMFCQREAERCTGASWQFATNGEKSLLFDAMNMTWTVINHEASKIKETWKKDRGLEKYFRKLSKGDCDHWLREFLGHWEAMPEPTVSPVNASDIHWSSSSLPDRWIILGAFILLVLMGIVLICVWWQNGEWQAGLWPLRTS.

The signal sequence occupies residues 1-30 (MRRISLTSSPVRLLLFLLLLLIALEIMVGG). Residues 31 to 116 (HSLCFNFTIK…DIKPQIKTSD (86 aa)) are MHC class I alpha-1 like; down-regulates the cell surface expression of KLRK1. Residues 31–225 (HSLCFNFTIK…IHWSSSSLPD (195 aa)) lie on the Extracellular side of the membrane. 3 N-linked (GlcNAc...) asparagine glycosylation sites follow: Asn36, Asn154, and Asn212. The interval 117-207 (PSTLQVEMFC…GHWEAMPEPT (91 aa)) is MHC class I alpha-2 like; down-regulates the cell surface expression of KLRK1. A disulfide bridge connects residues Cys126 and Cys189. The helical transmembrane segment at 226-248 (RWIILGAFILLVLMGIVLICVWW) threads the bilayer. Topologically, residues 249–263 (QNGEWQAGLWPLRTS) are cytoplasmic.

The protein belongs to the MHC class I family. Binds to KLRK1/NKG2D. As to quaternary structure, (Microbial infection) Contrary to other family members, does not interact with CMV glycoprotein UL16. Predominantly expressed in the skin, but also expressed in testis and trachea. Up-regulated in tumor cells of different origins. Expression progressively decreased after treatment of tumor cells with retinoic acid.

The protein localises to the membrane. It is found in the secreted. In terms of biological role, binds and activates the KLRK1/NKG2D receptor, mediating natural killer cell cytotoxicity. The sequence is that of Retinoic acid early transcript 1E from Homo sapiens (Human).